Here is a 230-residue protein sequence, read N- to C-terminus: Acyl-coenzyme A thioesterase THEM4 (230 aa).

A mitochondrion-targeting transit peptide spans 1–27; the sequence is MLRNCAMRLRTLGATPARRPGAARRLF. A phosphoserine mark is found at serine 28 and serine 29. N6-succinyllysine occurs at positions 46 and 57. Lysine 65 bears the N6-acetyllysine mark. N6-succinyllysine is present on residues lysine 89 and lysine 98. The active-site Proton donor/acceptor is aspartate 152. Substrate contacts are provided by residues lysine 175 and 196–197; that span reads RK. Lysine 197 bears the N6-succinyllysine mark.

It belongs to the THEM4/THEM5 thioesterase family. In terms of assembly, homodimer and homotetramer. Interacts with AKT1 in the cytosol. (Microbial infection) Interacts with V-AKT from AKT8 murine leukemia virus. Phosphorylated.

It is found in the cell membrane. The protein localises to the cell projection. Its subcellular location is the ruffle membrane. The protein resides in the cytoplasm. It localises to the mitochondrion. It is found in the mitochondrion inner membrane. The protein localises to the mitochondrion intermembrane space. The enzyme catalyses hexadecanoyl-CoA + H2O = hexadecanoate + CoA + H(+). The catalysed reaction is octanoyl-CoA + H2O = octanoate + CoA + H(+). It catalyses the reaction decanoyl-CoA + H2O = decanoate + CoA + H(+). It carries out the reaction dodecanoyl-CoA + H2O = dodecanoate + CoA + H(+). The enzyme catalyses tetradecanoyl-CoA + H2O = tetradecanoate + CoA + H(+). The catalysed reaction is (9Z)-octadecenoyl-CoA + H2O = (9Z)-octadecenoate + CoA + H(+). It catalyses the reaction (5Z,8Z,11Z,14Z)-eicosatetraenoyl-CoA + H2O = (5Z,8Z,11Z,14Z)-eicosatetraenoate + CoA + H(+). Functionally, has acyl-CoA thioesterase activity towards medium and long-chain (C14 to C18) fatty acyl-CoA substrates, and probably plays a role in mitochondrial fatty acid metabolism. Plays a role in the apoptotic process, possibly via its regulation of AKT1 activity. This chain is Acyl-coenzyme A thioesterase THEM4 (Them4), found in Mus musculus (Mouse).